The sequence spans 436 residues: Serine--tRNA ligase (436 aa).

A compositionally biased stretch (basic and acidic residues) spans 43 to 55 (TKSEQLKQKRNEV). The disordered stretch occupies residues 43 to 69 (TKSEQLKQKRNEVSDQIAQAKRNKEDA). Position 237–239 (237–239 (TAE)) interacts with L-serine. Residue 268–270 (RSE) participates in ATP binding. Position 291 (glutamate 291) interacts with L-serine. ATP is bound at residue 355–358 (EISS). Serine 390 contacts L-serine.

This sequence belongs to the class-II aminoacyl-tRNA synthetase family. Type-1 seryl-tRNA synthetase subfamily. As to quaternary structure, homodimer. The tRNA molecule binds across the dimer.

It is found in the cytoplasm. The catalysed reaction is tRNA(Ser) + L-serine + ATP = L-seryl-tRNA(Ser) + AMP + diphosphate + H(+). It carries out the reaction tRNA(Sec) + L-serine + ATP = L-seryl-tRNA(Sec) + AMP + diphosphate + H(+). Its pathway is aminoacyl-tRNA biosynthesis; selenocysteinyl-tRNA(Sec) biosynthesis; L-seryl-tRNA(Sec) from L-serine and tRNA(Sec): step 1/1. Functionally, catalyzes the attachment of serine to tRNA(Ser). Is also able to aminoacylate tRNA(Sec) with serine, to form the misacylated tRNA L-seryl-tRNA(Sec), which will be further converted into selenocysteinyl-tRNA(Sec). This Lactobacillus gasseri (strain ATCC 33323 / DSM 20243 / BCRC 14619 / CIP 102991 / JCM 1131 / KCTC 3163 / NCIMB 11718 / NCTC 13722 / AM63) protein is Serine--tRNA ligase.